The chain runs to 364 residues: Zinc finger protein 474 (364 aa).

The span at M1 to S10 shows a compositional bias: basic residues. Disordered regions lie at residues M1 to K21 and S37 to K60. The segment at G93–I122 adopts a C2HC/C3H-type 1 zinc-finger fold. Zn(2+)-binding residues include C97, C100, H112, and C116. Positions L127 to S147 are disordered. The segment covering K138–S147 has biased composition (low complexity). 3 C2HC/C3H-type zinc fingers span residues Q164–G193, R220–M249, and Q283–G312. Residues C168, C171, H183, C187, C224, C227, H239, C243, C287, C290, H302, and C306 each contribute to the Zn(2+) site. The interval C187–G214 is disordered.

The cofactor is Zn(2+).

The chain is Zinc finger protein 474 (ZNF474) from Homo sapiens (Human).